The primary structure comprises 220 residues: Coat protein TP4 (220 aa).

Its subcellular location is the virion. The protein is Coat protein TP4 of Thermoproteus tenax (TTV1).